The primary structure comprises 764 residues: MQQSAQLITENKEFNEDFPRFLKDVGLDNVGFDYHVVAVLGSQSTGKSTLLNKLFGTQFSTMDTVRRQQTTKGIWVSRGKDSSILIMDVEGTDGRERGDDQDFERKSALFSIATSEVIIVNMWENQIGLYQGSNMTLLKTVFEVNLQLFHENIERSRLQFVIRDFLGSTSLDNLSETLMTDLNRTWASISKPEGLENSVITDFFDVDFSALPHKVLCAEAFDEETDKLREQFLDEKNPKYLFKPCYHKRIPADGFPLYTQGIWQLIQNNRDLDLPTQQQLLAQYRCDEFIAEAMVSFDEQCEELLTFLKTHQSIENLLQRLEAIQTSTFSIFDENARRYQSEVYTKKRQELDRMMKTRLAVPIQRYLAAIHKELVAGFPERIATLVKDACFKDVARVTVSEMVSVMHSEAAALQKEGFVCDAEQTVETLRVELLQLVRSMREERLAQISAKLMVQFEQEFADAIDVSFHHLTKDIWDNIMHKFDELREKVLDEMLRSLNEYIDDEMDEDAELLRTKHMFKLKRSTWLVLRRTLENETAEPILQQRLRTHFEDSFRYDSRGIPKMWKKSDILENDFNKSLQDTLQLIDVLAIVRLKDGSVPTVDVPLAEEGEDTASNLEADTFFTFLNRKKKANIHVSVKRAADLVFLDCKRSIISTATRVPGYFWALLAVLGWNEFVSVLKNPVLLTLLLIVVSFLFILVQTGLAGPVKAFAERSVRNAVNSMGEKLAEKLDDYRSTSPASETTSGRVISAENSSVDEKVSTTP.

Residues 1-659 lie on the Cytoplasmic side of the membrane; that stretch reads MQQSAQLITE…KRSIISTATR (659 aa). In terms of domain architecture, GB1/RHD3-type G spans 31-246; sequence GFDYHVVAVL…NPKYLFKPCY (216 aa). 41–48 contributes to the GTP binding site; it reads GSQSTGKS. 2 coiled-coil regions span residues 302-322 and 421-443; these read EELL…QRLE and DAEQ…MREE. Residues 660–680 traverse the membrane as a helical segment; it reads VPGYFWALLAVLGWNEFVSVL. Over 681–683 the chain is Lumenal; the sequence is KNP. Residues 684-704 traverse the membrane as a helical segment; the sequence is VLLTLLLIVVSFLFILVQTGL. Residues 705-764 lie on the Cytoplasmic side of the membrane; it reads AGPVKAFAERSVRNAVNSMGEKLAEKLDDYRSTSPASETTSGRVISAENSSVDEKVSTTP. Residues 731–764 are disordered; that stretch reads LDDYRSTSPASETTSGRVISAENSSVDEKVSTTP. The segment covering 736–754 has biased composition (polar residues); that stretch reads STSPASETTSGRVISAENS.

Belongs to the TRAFAC class dynamin-like GTPase superfamily. GB1/RHD3 GTPase family. RHD3 subfamily.

It is found in the endoplasmic reticulum membrane. Its function is as follows. Cooperates with the reticulon proteins and tubule-shaping DP1 family proteins to generate and maintain the structure of the tubular endoplasmic reticulum network. Has GTPase activity, which is required for its function in ER organization. The protein is Protein sey1 (sey1) of Schizosaccharomyces japonicus (strain yFS275 / FY16936) (Fission yeast).